We begin with the raw amino-acid sequence, 192 residues long: Nucleotidase CA_C3379 (192 aa).

Belongs to the 5'(3')-deoxyribonucleotidase family. The cofactor is Mg(2+).

It catalyses the reaction sugar phosphate + H2O = sugar + phosphate.. In terms of biological role, catalyzes the dephosphorylation of nucleotide monophosphates and of different sugar phosphates in vitro. The chain is Nucleotidase CA_C3379 from Clostridium acetobutylicum (strain ATCC 824 / DSM 792 / JCM 1419 / IAM 19013 / LMG 5710 / NBRC 13948 / NRRL B-527 / VKM B-1787 / 2291 / W).